Here is a 161-residue protein sequence, read N- to C-terminus: Phosphopantetheine adenylyltransferase (161 aa).

Threonine 10 lines the substrate pocket. ATP is bound by residues 10–11 and histidine 18; that span reads TF. Residues lysine 42, leucine 74, and arginine 88 each coordinate substrate. ATP-binding positions include 89 to 91, glutamate 99, and 123 to 129; these read GVR and YIHISST.

The protein belongs to the bacterial CoaD family. As to quaternary structure, homohexamer. Mg(2+) is required as a cofactor.

It is found in the cytoplasm. The enzyme catalyses (R)-4'-phosphopantetheine + ATP + H(+) = 3'-dephospho-CoA + diphosphate. It participates in cofactor biosynthesis; coenzyme A biosynthesis; CoA from (R)-pantothenate: step 4/5. Reversibly transfers an adenylyl group from ATP to 4'-phosphopantetheine, yielding dephospho-CoA (dPCoA) and pyrophosphate. The protein is Phosphopantetheine adenylyltransferase of Aquifex aeolicus (strain VF5).